Reading from the N-terminus, the 544-residue chain is Lysophosphatidylcholine acyltransferase 2 (544 aa).

At 1–58 (MNRCAEAAAVAATVPGSGVGDAGLRPPMVPRQASFFPPPVPNPFVQQTTISASRRLQM) the chain is on the cytoplasmic side. A helical; Signal-anchor for type II membrane protein membrane pass occupies residues 59–79 (FLLGIILLPVRALLVGIILLL). Topologically, residues 80 to 544 (AWPFAVISTA…EEGTSDKKVD (465 aa)) are lumenal. The short motif at 146–151 (HSTFFD) is the HXXXXD motif element. An EGTC motif motif is present at residues 220-223 (EGTC). EF-hand domains lie at 391–426 (PVSD…LCNP) and 428–463 (NTEE…SLGV). D404, N406, D408, S410, E415, D441, D443, D445, Y447, and E452 together coordinate Ca(2+). Over residues 520–532 (TAPSVASNKVSPE) the composition is skewed to polar residues. The segment at 520 to 544 (TAPSVASNKVSPESQEEGTSDKKVD) is disordered.

The protein belongs to the 1-acyl-sn-glycerol-3-phosphate acyltransferase family. As to expression, highest expression is found in resident macrophages and casein-induced neutrophils followed by skin, colon, spleen and thioglycollate-induced macrophages. Detected in erythroleukemic cells but not in reticulocytes.

The protein resides in the endoplasmic reticulum membrane. The protein localises to the golgi apparatus membrane. It localises to the cell membrane. Its subcellular location is the lipid droplet. It catalyses the reaction a 1-acyl-sn-glycero-3-phosphocholine + an acyl-CoA = a 1,2-diacyl-sn-glycero-3-phosphocholine + CoA. It carries out the reaction a 1-O-alkyl-sn-glycero-3-phosphocholine + acetyl-CoA = a 1-O-alkyl-2-acetyl-sn-glycero-3-phosphocholine + CoA. The enzyme catalyses a 1-acyl-sn-glycero-3-phosphate + an acyl-CoA = a 1,2-diacyl-sn-glycero-3-phosphate + CoA. The catalysed reaction is a 1-O-(1Z-alkenyl)-sn-glycero-3-phosphocholine + an acyl-CoA = a 1-O-(1Z-alkenyl)-2-acyl-sn-glycero-3-phosphocholine + CoA. It catalyses the reaction 1-O-octadecyl-sn-glycero-3-phosphocholine + acetyl-CoA = 1-O-octadecyl-2-acetyl-sn-glycero-3-phosphocholine + CoA. It carries out the reaction 1-hexadecanoyl-sn-glycero-3-phosphocholine + acetyl-CoA = 1-hexadecanoyl-2-acetyl-sn-glycero-3-phosphocholine + CoA. The enzyme catalyses 1-octadecanoyl-sn-glycero-3-phosphocholine + acetyl-CoA = 1-octadecanoyl-2-acetyl-sn-glycero-3-phosphocholine + CoA. The catalysed reaction is a 1-O-(1Z-alkenyl)-sn-glycero-3-phosphocholine + acetyl-CoA = 1-O-(1Z)-alkenyl-2-acetyl-sn-glycero-3-phosphocholine + CoA. It catalyses the reaction 1-O-hexadecyl-sn-glycero-3-phosphocholine + acetyl-CoA = 1-O-hexadecyl-2-acetyl-sn-glycero-3-phosphocholine + CoA. It carries out the reaction 1-O-octadecyl-sn-glycero-3-phosphocholine + (5Z,8Z,11Z,14Z)-eicosatetraenoyl-CoA = 1-O-octadecyl-2-(5Z,8Z,11Z,14Z)-eicosatetraenoyl-sn-glycero-3-phosphocholine + CoA. The enzyme catalyses 1-hexadecanoyl-sn-glycero-3-phosphate + (9Z)-octadecenoyl-CoA = 1-hexadecanoyl-2-(9Z-octadecenoyl)-sn-glycero-3-phosphate + CoA. The catalysed reaction is 1-(9Z-octadecenoyl)-sn-glycero-3-phosphate + (9Z)-octadecenoyl-CoA = 1,2-di-(9Z-octadecenoyl)-sn-glycero-3-phosphate + CoA. It catalyses the reaction 1-(9Z-octadecenoyl)-sn-glycero-3-phosphate + hexadecanoyl-CoA = 1-(9Z)-octadecenoyl-2-hexadecanoyl-sn-glycero-3-phosphate + CoA. It carries out the reaction 1-heptadecanoyl-sn-glycero-3-phosphate + (9Z)-octadecenoyl-CoA = 1-heptadecanoyl-2-(9Z)-octadecenoyl-sn-glycero-3-phosphate + CoA. The enzyme catalyses 1-octadecanoyl-sn-glycero-3-phosphate + (9Z)-octadecenoyl-CoA = 1-octadecanoyl-2-(9Z-octadecenoyl)-sn-glycero-3-phosphate + CoA. The catalysed reaction is heptadecanoyl-CoA + 1-(9Z-octadecenoyl)-sn-glycero-3-phosphate = 1-(9Z)-octadecenoyl-2-heptadecanoyl-sn-glycero-3-phosphate + CoA. It catalyses the reaction 1-(9Z-octadecenoyl)-sn-glycero-3-phosphate + (9Z,12Z)-octadecadienoyl-CoA = 1-(9Z)-octadecenoyl-2-(9Z,12Z)-octadecadienoyl-sn-glycero-3-phosphate + CoA. It carries out the reaction 1-(9Z-octadecenoyl)-sn-glycero-3-phosphate + tetradecanoyl-CoA = 1-(9Z)-octadecenoyl-2-tetradecanoyl-sn-glycero-3-phosphate + CoA. The enzyme catalyses pentadecanoyl-CoA + 1-(9Z-octadecenoyl)-sn-glycero-3-phosphate = 1-(9Z)-octadecenoyl-2-pentadecanoyl-sn-glycero-3-phosphate + CoA. The catalysed reaction is nonadecanoyl-CoA + 1-(9Z-octadecenoyl)-sn-glycero-3-phosphate = 1-(9Z)-octadecenoyl-2-nonadecanoyl-sn-glycero-3-phosphate + CoA. It catalyses the reaction 1-hexadecanoyl-sn-glycero-3-phosphocholine + (9Z)-octadecenoyl-CoA = 1-hexadecanoyl-2-(9Z-octadecenoyl)-sn-glycero-3-phosphocholine + CoA. Its pathway is lipid metabolism; phospholipid metabolism. Acetyltransferase activity is increased following acute inflammatory stimulation by lipopolysaccharide (LPS). Acyltransferase activity is unchanged. In terms of biological role, exhibits both acyltransferase and acetyltransferase activities. Activity is calcium-dependent. Catalyzes the conversion of lysophosphatidylcholine (1-acyl-sn-glycero-3-phosphocholine or LPC) into phosphatidylcholine (1,2-diacyl-sn-glycero-3-phosphocholine or PC). Catalyzes the conversion 1-acyl-sn-glycerol-3-phosphate (lysophosphatidic acid or LPA) into 1,2-diacyl-sn-glycerol-3-phosphate (phosphatidic acid or PA) by incorporating an acyl moiety at the sn-2 position of the glycerol backbone. Involved in platelet-activating factor (PAF) biosynthesis by catalyzing the conversion of the PAF precursor, 1-O-alkyl-sn-glycero-3-phosphocholine (lyso-PAF) into 1-O-alkyl-2-acetyl-sn-glycero-3-phosphocholine (PAF). Also converts lyso-PAF to 1-O-alkyl-2-acyl-sn-glycero-3-phosphocholine (PC), a major component of cell membranes and a PAF precursor. Under resting conditions, acyltransferase activity is preferred. Upon acute inflammatory stimulus, acetyltransferase activity is enhanced and PAF synthesis increases. Involved in the regulation of lipid droplet number and size. This chain is Lysophosphatidylcholine acyltransferase 2 (Lpcat2), found in Mus musculus (Mouse).